The following is a 279-amino-acid chain: MTARMEQRFADVAAEGRPVLVTYFMGGDPDFETSLSIMQALPKAGADVIELGVPFSDPMADGPAIQLAGQRALKAGQTLAKTLELARRFRAEDQRTPIVLMGYYNPIYIYGVERFLNDAVEAGVDGLIVVDLPPEMDDELCIPALKKGISFIRLATPTTDDRRLPKVLENTSGFVYYVSMTGITGSALPDPSRIAGAVARIKSHTSLPVCVGFGVKTAEHARVIGASADGVVVGTAIVNQIASSLTEEGRVTEATVPGVEALVRGLSAGVRAARLAAAE.

Residues glutamate 50 and aspartate 61 each act as proton acceptor in the active site.

It belongs to the TrpA family. As to quaternary structure, tetramer of two alpha and two beta chains.

It carries out the reaction (1S,2R)-1-C-(indol-3-yl)glycerol 3-phosphate + L-serine = D-glyceraldehyde 3-phosphate + L-tryptophan + H2O. It functions in the pathway amino-acid biosynthesis; L-tryptophan biosynthesis; L-tryptophan from chorismate: step 5/5. Its function is as follows. The alpha subunit is responsible for the aldol cleavage of indoleglycerol phosphate to indole and glyceraldehyde 3-phosphate. This Sinorhizobium fredii (strain NBRC 101917 / NGR234) protein is Tryptophan synthase alpha chain.